We begin with the raw amino-acid sequence, 335 residues long: Dehydration-responsive element-binding protein 2A (335 aa).

Disordered regions lie at residues Met1–Val32 and Ser50–Asn74. Residues Arg19 to Lys55 carry the Nuclear localization signal motif. The segment covering Lys52–Met66 has biased composition (basic residues). Positions Ser78–Pro135 form a DNA-binding region, AP2/ERF. Residues Gln279–Leu304 form a disordered region. A compositionally biased stretch (polar residues) spans Ser286–Leu304.

It belongs to the AP2/ERF transcription factor family. ERF subfamily. As to quaternary structure, interacts with MED25. Binds to DPB3-1 in the nucleus during heat-stress. In terms of processing, ubiquitinated by DRIP1 and DRIP2. Ubiquitination probably leads to its subsequent degradation, thus negatively regulating response to drought. Expressed preferentially in roots and stems, and at a lower level in leaves.

It is found in the nucleus. In terms of biological role, transcriptional activator that binds specifically to the DNA sequence 5'-[AG]CCGAC-3'. Binding to the C-repeat/DRE element mediates high salinity- and dehydration-inducible transcription. Promotes the expression of heat stress-inducible genes by contributing to the formation of a heat stress-specific transcriptional complex with NF-Y subunits (e.g. DPB3-1, NF-YA2 and NF-YB3) at the promoter of target genes, thus promoting heat tolerance. The protein is Dehydration-responsive element-binding protein 2A of Arabidopsis thaliana (Mouse-ear cress).